Consider the following 659-residue polypeptide: MAAFSKYLTARNTSLAGAAFLLLCLLHKRRRALGLHGKKSGKPPLQNNEKEGKKERAVVDKVFLSRLSQILKIMVPRTFCKETGYLLLIAVMLVSRTYCDVWMIQNGTLIESGIIGRSSKDFKRYLFNFIAAMPLISLVNNFLKYGLNELKLCFRVRLTRYLYEEYLQAFTYYKMGNLDNRIANPDQLLTQDVEKFCNSVVDLYSNLSKPFLDIVLYIFKLTSAIGAQGPASMMAYLLVSGLFLTRLRRPIGKMTIMEQKYEGEYRYVNSRLITNSEEIAFYNGNKREKQTIHSVFRKLVEHLHNFIFFRFSMGFIDSIIAKYVATVVGYLVVSRPFLDLAHPRHLHSTHSELLEDYYQSGRMLLRMSQALGRIVLAGREMTRLAGFTARITELMQVLKDLNHGRYERTMVSQQEKGIEGAQASPLVPGAGEIINTDNIIKFDHVPLATPNGDILIQDLSFEVRSGANVLICGPNGCGKSSLFRVLGELWPLFGGRLTKPERGKLFYVPQRPYMTLGTLRDQVIYPDGKEDQKKRGISDQVLKEYLDNVQLGHILEREGGWDSVQDWMDVLSGGEKQRMAMARLFYHKPQFAILDECTSAVSVDVEDYIYSHCRKVGITLFTVSHRKSLWKHHEYYLHMDGRGNYEFKKITEDTVEFGS.

The interval 1 to 61 (MAAFSKYLTA…GKKERAVVDK (61 aa)) is interaction with PEX19. N12 is a glycosylation site (N-linked (GlcNAc...) asparagine). K61 is subject to N6-acetyllysine. Residues 84-104 (GYLLLIAVMLVSRTYCDVWMI) form a helical membrane-spanning segment. The 288-residue stretch at 85–372 (YLLLIAVMLV…MLLRMSQALG (288 aa)) folds into the ABC transmembrane type-1 domain. An N-linked (GlcNAc...) asparagine glycan is attached at N106. The chain crosses the membrane as a helical span at residues 126-146 (LFNFIAAMPLISLVNNFLKYG). An N-linked (GlcNAc...) asparagine glycan is attached at N206. A helical transmembrane segment spans residues 224–244 (AIGAQGPASMMAYLLVSGLFL). K260 carries the post-translational modification N6-acetyllysine. A helical transmembrane segment spans residues 313-333 (MGFIDSIIAKYVATVVGYLVV). N6-acetyllysine is present on K399. S424 is subject to Phosphoserine. The ABC transporter domain occupies 434 to 659 (INTDNIIKFD…ITEDTVEFGS (226 aa)). 473 to 480 (GPNGCGKS) lines the ATP pocket. K533 is modified (N6-acetyllysine). S659 carries the post-translational modification Phosphoserine.

Belongs to the ABC transporter superfamily. ABCD family. Peroxisomal fatty acyl CoA transporter (TC 3.A.1.203) subfamily. Homodimers. Can form heterodimers with ABCD1 and ABCD2. Dimerization is necessary to form an active transporter. Interacts with PEX19; mediates the targeting of ABCD3 to peroxisomes. Ubiquitinated by PEX2 during pexophagy in response to starvation, leading to its degradation.

It is found in the peroxisome membrane. The catalysed reaction is a very long-chain fatty acyl-CoA + H2O = a very long-chain fatty acid + CoA + H(+). The enzyme catalyses a very long-chain fatty acid(in) + ATP + H2O = a very long-chain fatty acid(out) + ADP + phosphate + H(+). It carries out the reaction a long-chain fatty acyl-CoA + H2O = a long-chain fatty acid + CoA + H(+). It catalyses the reaction a long-chain fatty acid(in) + ATP + H2O = a long-chain fatty acid(out) + ADP + phosphate + H(+). The catalysed reaction is pristanoyl-CoA + H2O = 2,6,10,14-tetramethylpentadecanoate + CoA + H(+). The enzyme catalyses 2,6,10,14-tetramethylpentadecanoate(in) + ATP + H2O = 2,6,10,14-tetramethylpentadecanoate(out) + ADP + phosphate + H(+). It carries out the reaction hexadecanedioyl-CoA + H2O = hexadecanedioate + CoA + H(+). It catalyses the reaction hexadecanedioate(in) + ATP + H2O = hexadecanedioate(out) + ADP + phosphate + H(+). The catalysed reaction is (5Z,8Z,11Z,14Z,17Z)-eicosapentaenoyl-CoA + H2O = (5Z,8Z,11Z,14Z,17Z)-eicosapentaenoate + CoA + H(+). The enzyme catalyses (5Z,8Z,11Z,14Z,17Z)-eicosapentaenoate(in) + ATP + H2O = (5Z,8Z,11Z,14Z,17Z)-eicosapentaenoate(out) + ADP + phosphate + H(+). It carries out the reaction (4Z,7Z,10Z,13Z,16Z,19Z)-docosahexaenoyl-CoA + H2O = (4Z,7Z,10Z,13Z,16Z,19Z)-docosahexaenoate + CoA + H(+). It catalyses the reaction (4Z,7Z,10Z,13Z,16Z,19Z)-docosahexaenoate(in) + ATP + H2O = (4Z,7Z,10Z,13Z,16Z,19Z)-docosahexaenoate(out) + ADP + phosphate + H(+). Functionally, broad substrate specificity ATP-dependent transporter of the ATP-binding cassette (ABC) family that catalyzes the transport of long-chain fatty acids (LCFA)-CoA, dicarboxylic acids-CoA, long-branched-chain fatty acids-CoA and bile acids from the cytosol to the peroxisome lumen for beta-oxydation. Has fatty acyl-CoA thioesterase and ATPase activities. Probably hydrolyzes fatty acyl-CoAs into free fatty acids prior to their ATP-dependent transport into peroxisomes. Thus, play a role in regulation of LCFAs and energy metabolism namely, in the degradation and biosynthesis of fatty acids by beta-oxidation. The sequence is that of ATP-binding cassette sub-family D member 3 (Abcd3) from Mus musculus (Mouse).